The following is a 443-amino-acid chain: MSTTPATPKVGFVSLGCPKALVDSERILTQLRMEGYEVVPTYEDADVVVVNTCGFIDSAKAESLEVIGEAIKENGKVIVTGCMGVEEGSIRDVHPSVLSVTGPQQYEQVVNAVHEVVPPRQDHNPLIDLVPPQGVKLTPRHYAYLKISEGCNHSCSFCIIPSMRGKLVSRPVGEVLSEAERLVKAGVKEILVISQDTSAYGVDVKYKTDFWNGRPVKTRMLELCEALSSLGAWVRLHYVYPYPNVDDVIPLMAAGKILPYLDIPFQHASPKVLKSMKRPAFEDRTLARIKNWREQCPELVIRSTFIVGFPGETEEDFQYLLDWLTEAQLDRVGCFQYSPVEGAPANDLGLEEVPDDIKQERWDRFMAHQQAISTARLQLRIGKEIEVLIDEVEEQGSVGRSFFDAPEIDGNVFIDGDHGFKPGDKVRCRVVDADEYDMWAEPI.

The MTTase N-terminal domain maps to 8-118 (PKVGFVSLGC…VVNAVHEVVP (111 aa)). [4Fe-4S] cluster contacts are provided by C17, C53, C82, C151, C155, and C158. The Radical SAM core domain occupies 137–375 (LTPRHYAYLK…MAHQQAISTA (239 aa)). One can recognise a TRAM domain in the interval 378-443 (QLRIGKEIEV…DEYDMWAEPI (66 aa)).

It belongs to the methylthiotransferase family. RimO subfamily. The cofactor is [4Fe-4S] cluster.

The protein localises to the cytoplasm. It carries out the reaction L-aspartate(89)-[ribosomal protein uS12]-hydrogen + (sulfur carrier)-SH + AH2 + 2 S-adenosyl-L-methionine = 3-methylsulfanyl-L-aspartate(89)-[ribosomal protein uS12]-hydrogen + (sulfur carrier)-H + 5'-deoxyadenosine + L-methionine + A + S-adenosyl-L-homocysteine + 2 H(+). Its function is as follows. Catalyzes the methylthiolation of an aspartic acid residue of ribosomal protein uS12. This Pseudomonas putida (strain GB-1) protein is Ribosomal protein uS12 methylthiotransferase RimO.